Reading from the N-terminus, the 116-residue chain is Nitrogen regulatory PII-like protein (116 aa).

This sequence belongs to the P(II) protein family. In terms of assembly, needs to interact with NrgA in order to localize correctly to the membrane.

The protein localises to the cell membrane. Required for full induction of the nrgAB operon under conditions of ammonium limitation. This chain is Nitrogen regulatory PII-like protein (nrgB), found in Bacillus subtilis (strain 168).